The following is a 224-amino-acid chain: Synaptogyrin-2 (224 aa).

Met1 carries the post-translational modification N-acetylmethionine. A Phosphoserine modification is found at Ser3. An MARVEL domain is found at 20–171 (FLSQPQVVTR…LASLAYQRYK (152 aa)). The next 4 helical transmembrane spans lie at 31-51 (VSMVLALIVFSCIFGEGYTNI), 72-92 (SAIGVLAFLASAFFLVVDAFF), 105-125 (VIGDLLFSALWTFLWFVGFCF), and 147-167 (AAITFSFFSIFSWGVLASLAY).

Belongs to the synaptogyrin family. May be tyrosine phosphorylated by Src.

It localises to the cytoplasmic vesicle membrane. The protein localises to the cytoplasmic vesicle. Its subcellular location is the secretory vesicle. The protein resides in the synaptic vesicle membrane. Its function is as follows. May play a role in regulated exocytosis. In neuronal cells, modulates the localization of synaptophysin/SYP into synaptic-like microvesicles and may therefore play a role in the formation and/or the maturation of this vesicles. May also play a role in GLUT4 storage and transport to the plasma membrane. This Mus musculus (Mouse) protein is Synaptogyrin-2.